The sequence spans 125 residues: Succinate dehydrogenase assembly factor 3, mitochondrial (125 aa).

The transit peptide at 1–42 (MRTTNHLYRTVHRQGKPLLPPLHLYRRILRAHRTFPPAQRAL) directs the protein to the mitochondrion.

This sequence belongs to the complex I LYR family. SDHAF3 subfamily. Interacts with the iron-sulfur protein subunit within the SDH catalytic dimer.

Its subcellular location is the mitochondrion matrix. In terms of biological role, plays an essential role in the assembly of succinate dehydrogenase (SDH), an enzyme complex (also referred to as respiratory complex II) that is a component of both the tricarboxylic acid (TCA) cycle and the mitochondrial electron transport chain, and which couples the oxidation of succinate to fumarate with the reduction of ubiquinone (coenzyme Q) to ubiquinol. Promotes maturation of the iron-sulfur protein subunit of the SDH catalytic dimer, protecting it from the deleterious effects of oxidants. May act together with SDHAF1. The protein is Succinate dehydrogenase assembly factor 3, mitochondrial of Eremothecium gossypii (strain ATCC 10895 / CBS 109.51 / FGSC 9923 / NRRL Y-1056) (Yeast).